The primary structure comprises 69 residues: Bacteriocin microcin B17 (69 aa).

The propeptide occupies 1-26 (MELKASEFGVVLSVDALKLSRQSPLG). The oxazole-4-carboxylic acid (Gly-Ser) cross-link spans 39-40 (GS). Positions 40–41 (SC) form a cross-link, thiazole-4-carboxylic acid (Ser-Cys). 3 consecutive cross-links (thiazole-4-carboxylic acid (Gly-Cys)) follow at residues 47 to 48 (GC), 50 to 51 (GC), and 54 to 55 (GC). A cross-link (oxazole-4-carboxylic acid (Cys-Ser)) is located at residues 55 to 56 (CS). Cross-links (oxazole-4-carboxylic acid (Gly-Ser)) lie at residues 61-62 (GS) and 64-65 (GS).

The processed N-terminus does not resemble a typical secretion signal sequence. In terms of processing, maturation of thiazole and oxazole containing antibiotics involves the enzymatic condensation of a Cys, Ser or Thr with the alpha-carbonyl of the preceding amino acid to form a thioether or ether bond, then dehydration to form a double bond with the alpha-amino nitrogen. Thiazoline or oxazoline rings are dehydrogenated to form thiazole or oxazole rings.

Its function is as follows. This glycine-rich peptide antibiotic inhibits DNA replication in many enteric bacteria, that leads to induction of the SOS repair system, massive DNA degradation and cell death. B17 inhibits type II topoisomerase by trapping an enzyme - DNA cleavable complex. The chain is Bacteriocin microcin B17 (mcbA) from Escherichia coli.